We begin with the raw amino-acid sequence, 1603 residues long: Vitellogenin-5 (1603 aa).

Positions 1–15 are cleaved as a signal peptide; sequence MKSIIIASLVALAIA. The 662-residue stretch at 24 to 685 folds into the Vitellogenin domain; it reads FSPKSEYVYK…EKNAFLPKEV (662 aa). Residues 1306-1475 enclose the VWFD domain; sequence ATCKVDQSEV…SYLLKNEECE (170 aa). 2 disulfide bridges follow: cysteine 1308-cysteine 1438 and cysteine 1330-cysteine 1474. Residues 1492 to 1513 are disordered; the sequence is NREEKKSDYESSSDYESNYDEK.

Post-translationally, vitellogenin 5 undergoes little if any processing before being packaged into yolk platelets. Expressed in the intestine of adult hermaphrodites.

The protein resides in the secreted. Precursor of the egg-yolk proteins that are sources of nutrients during embryonic development. Together with other vitellogenins, may play a role in modulating life-span, acting via induction of autophagy and lysosomal lipolysis. The protein is Vitellogenin-5 (vit-5) of Caenorhabditis elegans.